The primary structure comprises 161 residues: Cyclic pyranopterin monophosphate synthase (161 aa).

Residues 75 to 77 and 113 to 114 each bind substrate; these read LCH and ME. Residue aspartate 128 is part of the active site.

This sequence belongs to the MoaC family. As to quaternary structure, homohexamer; trimer of dimers.

It catalyses the reaction (8S)-3',8-cyclo-7,8-dihydroguanosine 5'-triphosphate = cyclic pyranopterin phosphate + diphosphate. Its pathway is cofactor biosynthesis; molybdopterin biosynthesis. Its function is as follows. Catalyzes the conversion of (8S)-3',8-cyclo-7,8-dihydroguanosine 5'-triphosphate to cyclic pyranopterin monophosphate (cPMP). The polypeptide is Cyclic pyranopterin monophosphate synthase (Citrobacter koseri (strain ATCC BAA-895 / CDC 4225-83 / SGSC4696)).